The primary structure comprises 514 residues: Probable E3 ubiquitin-protein ligase ARI10 (514 aa).

The span at 1–18 shows a compositional bias: acidic residues; sequence MDYSDDDMIDNESGEENN. The interval 1–26 is disordered; the sequence is MDYSDDDMIDNESGEENNSDGGGNES. A TRIAD supradomain region spans residues 117–322; the sequence is VDIQCGICFE…SDHYACNNYV (206 aa). Residues C121, C124, C138, H140, C143, C146, C166, C171, C210, C215, C231, C233, C238, C241, H246, C251, C278, and C281 each contribute to the Zn(2+) site. Residues 121–171 form an RING-type 1 zinc finger; sequence CGICFESYTRKEIASVSCGHPYCKTCWTGYITTKIEDGPGCLRVKCPEPSC. The IBR-type zinc-finger motif lies at 190 to 251; it reads DKYYRYFLRS…SEDAHSPVDC (62 aa). The RING-type 2; atypical zinc-finger motif lies at 278–308; the sequence is CPKCKRPIEKSHGCNHMTCSASCGHRFCWIC. C291 is an active-site residue. Zn(2+) is bound by residues C296, C300, C305, C308, H315, and C318.

Belongs to the RBR family. Ariadne subfamily. The cofactor is Zn(2+).

It catalyses the reaction [E2 ubiquitin-conjugating enzyme]-S-ubiquitinyl-L-cysteine + [acceptor protein]-L-lysine = [E2 ubiquitin-conjugating enzyme]-L-cysteine + [acceptor protein]-N(6)-ubiquitinyl-L-lysine.. The protein operates within protein modification; protein ubiquitination. Its function is as follows. Might act as an E3 ubiquitin-protein ligase, or as part of E3 complex, which accepts ubiquitin from specific E2 ubiquitin-conjugating enzymes and then transfers it to substrates. The protein is Probable E3 ubiquitin-protein ligase ARI10 (ARI10) of Arabidopsis thaliana (Mouse-ear cress).